We begin with the raw amino-acid sequence, 467 residues long: Zinc finger and BTB domain-containing protein 43 (467 aa).

Position 1 is an N-acetylmethionine (methionine 1). The 65-residue stretch at 33 to 97 folds into the BTB domain; that stretch reads CDVSIVVQGH…SYTGRLVMPA (65 aa). Disordered regions lie at residues 134 to 153 and 162 to 225; these read LNHG…GLVE and HTDF…SAEF. Composition is skewed to basic and acidic residues over residues 164–174 and 182–194; these read DFPKAQELRDG and KDEL…EHEY. Residues lysine 182, lysine 241, lysine 247, lysine 297, and lysine 358 each participate in a glycyl lysine isopeptide (Lys-Gly) (interchain with G-Cter in SUMO2) cross-link. The C2H2-type 1; atypical zinc finger occupies 373–394; sequence YPCQCGKSFTHKSQRDRHMSMH. Residues 400–422 form a C2H2-type 2 zinc finger; sequence YGCGVCGKKFKMKHHLVGHMKIH. Position 423 is a phosphothreonine (threonine 423). Residues 428–450 form a C2H2-type 3; atypical zinc finger; sequence YECNICAKRFMWRDSFHRHVTSC. A Glycyl lysine isopeptide (Lys-Gly) (interchain with G-Cter in SUMO2) cross-link involves residue lysine 458.

It belongs to the krueppel C2H2-type zinc-finger protein family. Interacts with BDP1.

It is found in the nucleus. In terms of biological role, may be involved in transcriptional regulation. In Homo sapiens (Human), this protein is Zinc finger and BTB domain-containing protein 43 (ZBTB43).